The chain runs to 184 residues: ATP synthase subunit delta (184 aa).

This sequence belongs to the ATPase delta chain family. F-type ATPases have 2 components, F(1) - the catalytic core - and F(0) - the membrane proton channel. F(1) has five subunits: alpha(3), beta(3), gamma(1), delta(1), epsilon(1). CF(0) has four main subunits: a(1), b(1), b'(1) and c(10-14). The alpha and beta chains form an alternating ring which encloses part of the gamma chain. F(1) is attached to F(0) by a central stalk formed by the gamma and epsilon chains, while a peripheral stalk is formed by the delta, b and b' chains.

The protein resides in the cellular thylakoid membrane. Functionally, f(1)F(0) ATP synthase produces ATP from ADP in the presence of a proton or sodium gradient. F-type ATPases consist of two structural domains, F(1) containing the extramembraneous catalytic core and F(0) containing the membrane proton channel, linked together by a central stalk and a peripheral stalk. During catalysis, ATP synthesis in the catalytic domain of F(1) is coupled via a rotary mechanism of the central stalk subunits to proton translocation. In terms of biological role, this protein is part of the stalk that links CF(0) to CF(1). It either transmits conformational changes from CF(0) to CF(1) or is implicated in proton conduction. The protein is ATP synthase subunit delta of Nostoc punctiforme (strain ATCC 29133 / PCC 73102).